Consider the following 132-residue polypeptide: Small ribosomal subunit protein uS11 (132 aa).

Basic residues predominate over residues 1-16; that stretch reads MAAGMKGKRSRRRKER. Residues 1-20 form a disordered region; sequence MAAGMKGKRSRRRKERKNVE.

The protein belongs to the universal ribosomal protein uS11 family. In terms of assembly, part of the 30S ribosomal subunit. Interacts with proteins S7 and S18. Binds to IF-3.

Functionally, located on the platform of the 30S subunit, it bridges several disparate RNA helices of the 16S rRNA. Forms part of the Shine-Dalgarno cleft in the 70S ribosome. This is Small ribosomal subunit protein uS11 from Clostridium botulinum (strain Kyoto / Type A2).